The following is a 248-amino-acid chain: Probable transcriptional regulatory protein OCAR_7305/OCA5_c08120 (248 aa).

Belongs to the TACO1 family.

It localises to the cytoplasm. This chain is Probable transcriptional regulatory protein OCAR_7305/OCA5_c08120, found in Afipia carboxidovorans (strain ATCC 49405 / DSM 1227 / KCTC 32145 / OM5) (Oligotropha carboxidovorans).